A 2556-amino-acid polypeptide reads, in one-letter code: Ubiquitin carboxyl-terminal hydrolase 9Y (2556 aa).

The span at 1–33 (MTITTRGSPVGENESQGQTSDGQPQPSFQQNQI) shows a compositional bias: polar residues. The tract at residues 1 to 68 (MTITTRGSPV…QHEEEDPSFP (68 aa)) is disordered. Residues 34 to 44 (SSSDSSNETSP) show a composition bias toward low complexity. Phosphoserine is present on Ser587. Thr589 carries the post-translational modification Phosphothreonine. The segment at 971–999 (NMPSSPDSSSDSSAGPPGNHSHNNYRDVS) is disordered. The span at 973–983 (PSSPDSSSDSS) shows a compositional bias: low complexity. One can recognise a USP domain in the interval 1559–1958 (VGLKNAGATC…NAYILFYERM (400 aa)). Cys1568 functions as the Nucleophile in the catalytic mechanism. Cys1729, His1731, Cys1773, and Cys1776 together coordinate Zn(2+). Residue His1881 is the Proton acceptor of the active site. Residue Ser2447 is modified to Phosphoserine. Positions 2513-2556 (QNYVPEQPFSGPASHHLNNPQKNDKPQETHESNEEISSCLIKDQ) are disordered. A compositionally biased stretch (basic and acidic residues) spans 2534–2545 (KNDKPQETHESN). Ser2549 carries the post-translational modification Phosphoserine.

The protein belongs to the peptidase C19 family.

The enzyme catalyses Thiol-dependent hydrolysis of ester, thioester, amide, peptide and isopeptide bonds formed by the C-terminal Gly of ubiquitin (a 76-residue protein attached to proteins as an intracellular targeting signal).. It participates in protein modification; protein ubiquitination. Its function is as follows. Deubiquitinase that mediates deubiquitination of target proteins. May stabilize target proteins that are important for male germ cell development. The sequence is that of Ubiquitin carboxyl-terminal hydrolase 9Y from Mus musculus (Mouse).